The sequence spans 599 residues: Pentatricopeptide repeat-containing protein At3g62540, mitochondrial (599 aa).

The N-terminal 99 residues, 1 to 99 (MAAAPWLYLS…RGFSSGSSNV (99 aa)), are a transit peptide targeting the mitochondrion. 10 PPR repeats span residues 194-228 (ASRT…GLLT), 230-262 (ETFT…KFKI), 263-293 (GVET…LKER), 297-331 (NMMT…GLKP), 332-366 (DIVA…GPCP), 367-401 (NVRS…GLQP), 402-436 (DAAV…GHPP), 437-471 (DGKT…EIEP), 472-506 (SIHT…GICP), and 507-541 (DDNS…GMKT).

Belongs to the PPR family. P subfamily.

Its subcellular location is the mitochondrion. This chain is Pentatricopeptide repeat-containing protein At3g62540, mitochondrial, found in Arabidopsis thaliana (Mouse-ear cress).